Here is a 356-residue protein sequence, read N- to C-terminus: Chorismate synthase (356 aa).

NADP(+) is bound at residue Arg-44. FMN-binding positions include 121 to 123 (HFS), Gly-278, 293 to 297 (KPTPS), and Arg-320.

This sequence belongs to the chorismate synthase family. It depends on FMNH2 as a cofactor.

It carries out the reaction 5-O-(1-carboxyvinyl)-3-phosphoshikimate = chorismate + phosphate. The protein operates within metabolic intermediate biosynthesis; chorismate biosynthesis; chorismate from D-erythrose 4-phosphate and phosphoenolpyruvate: step 7/7. Its function is as follows. Catalyzes the anti-1,4-elimination of the C-3 phosphate and the C-6 proR hydrogen from 5-enolpyruvylshikimate-3-phosphate (EPSP) to yield chorismate, which is the branch point compound that serves as the starting substrate for the three terminal pathways of aromatic amino acid biosynthesis. This reaction introduces a second double bond into the aromatic ring system. The sequence is that of Chorismate synthase from Pyrococcus abyssi (strain GE5 / Orsay).